The primary structure comprises 234 residues: Fibronectin type III domain-containing protein 4 (234 aa).

The signal sequence occupies residues 1 to 44; sequence MPSGCHSSPPSGLRGDMASLVPLSPYLSPTVLLLVSCDLGFVRA. The Extracellular segment spans residues 45-167; that stretch reads DRPPSPVNVT…GLDGERPLQT (123 aa). The Fibronectin type-III domain maps to 47–140; sequence PPSPVNVTVT…PRVHFRTLKG (94 aa). N-linked (GlcNAc...) asparagine glycosylation is found at Asn-52, Asn-97, and Asn-147. A disordered region spans residues 122-160; the sequence is GLRGESPPGPRVHFRTLKGSDRLPSNSSSPGDITVEGLD. The chain crosses the membrane as a helical span at residues 168-188; the sequence is GEVVIIVVVLLMWAAVIGLFC. Over 189–234 the chain is Cytoplasmic; the sequence is RQYDIIKDNDSNNNPKEKGKGPEQSPQGRPVGTRQKKSPSINTIDV. Positions 197 to 209 are enriched in basic and acidic residues; the sequence is NDSNNNPKEKGKG. Residues 197–234 are disordered; it reads NDSNNNPKEKGKGPEQSPQGRPVGTRQKKSPSINTIDV.

In terms of tissue distribution, highly expressed in the liver and the brain, including in the cortex, hypothalamus and hippocampus. Also expressed in adipose tissue.

Its subcellular location is the membrane. The protein resides in the secreted. Functionally, has anti-inflammatory properties. In the colon, acts on macrophages to down-regulate inflammation. May suppress osteoclastogenesis and mature osteoclast resorptive function. In white adipose tissue, decreases local inflammation, via interaction with GPR116. Also required for proper systemic glucose tolerance, specifically sensitizing white adipocytes to insulin and promoting glucose uptake. The insulin sensitizing function in adipose tissue is mediated by interaction with ADGRF5/GPR116 and activation of cAMP signaling. The chain is Fibronectin type III domain-containing protein 4 (FNDC4) from Homo sapiens (Human).